We begin with the raw amino-acid sequence, 85 residues long: Metallothionein-like protein 4B (85 aa).

The disordered stretch occupies residues 1–20 (MADTGKGSASASCNDRCGCP).

The protein belongs to the metallothionein superfamily. Type 15 family. As to expression, expressed specifically in seeds.

It is found in the cytoplasm. It localises to the nucleus. The protein localises to the cell membrane. In terms of biological role, metallothioneins have a high content of cysteine residues that bind various heavy metals. Functions as a metal chelator of copper (Cu) and zinc (Zn). Plays a role in storing and distributing Zn ion in seed. In Arabidopsis thaliana (Mouse-ear cress), this protein is Metallothionein-like protein 4B (MT4B).